The primary structure comprises 408 residues: PTI1-like tyrosine-protein kinase 3 (408 aa).

Basic and acidic residues predominate over residues 59 to 76; it reads SSENEHLRSPKHHNDFGH. Residues 59-91 form a disordered region; the sequence is SSENEHLRSPKHHNDFGHHTRKPQAAVKPDALK. A Protein kinase domain is found at 113–395; it reads FGSKSLIGEG…IVVKALQPLL (283 aa). ATP-binding positions include 119–127 and Lys141; that span reads IGEGSYGRA. The Proton acceptor role is filled by Asp245.

Belongs to the protein kinase superfamily. Tyr protein kinase family. In terms of assembly, interacts with OXI1. Post-translationally, phosphorylated by OXI1.

The protein localises to the cell membrane. It catalyses the reaction L-tyrosyl-[protein] + ATP = O-phospho-L-tyrosyl-[protein] + ADP + H(+). The sequence is that of PTI1-like tyrosine-protein kinase 3 (PTI13) from Arabidopsis thaliana (Mouse-ear cress).